The following is a 318-amino-acid chain: 2-keto-3-deoxygluconate permease (318 aa).

The next 10 helical transmembrane spans lie at 10–30, 42–62, 76–96, 105–125, 139–159, 163–183, 199–219, 224–244, 263–283, and 289–309; these read IPGG…TFTP, GLIT…GASI, VLVV…GTFL, MLAG…NGGL, AGAF…VILG, IATF…IGFA, VQTL…LSVI, FAGI…LILA, AGAA…FAPV, and ALVA…TALW.

Belongs to the KdgT transporter family.

Its subcellular location is the cell inner membrane. It catalyses the reaction 2-dehydro-3-deoxy-D-gluconate(in) + H(+)(in) = 2-dehydro-3-deoxy-D-gluconate(out) + H(+)(out). Functionally, catalyzes the proton-dependent uptake of 2-keto-3-deoxygluconate (KDG) into the cell. The chain is 2-keto-3-deoxygluconate permease from Pectobacterium carotovorum subsp. carotovorum (Erwinia carotovora subsp. carotovora).